The following is a 289-amino-acid chain: Lipoyl synthase (289 aa).

Cys-33, Cys-38, Cys-44, Cys-59, Cys-63, Cys-66, and Ser-274 together coordinate [4Fe-4S] cluster. A Radical SAM core domain is found at 45–263; the sequence is FAGGTATFLI…SQGESELGFL (219 aa).

Belongs to the radical SAM superfamily. Lipoyl synthase family. [4Fe-4S] cluster serves as cofactor.

It localises to the cytoplasm. It carries out the reaction [[Fe-S] cluster scaffold protein carrying a second [4Fe-4S](2+) cluster] + N(6)-octanoyl-L-lysyl-[protein] + 2 oxidized [2Fe-2S]-[ferredoxin] + 2 S-adenosyl-L-methionine + 4 H(+) = [[Fe-S] cluster scaffold protein] + N(6)-[(R)-dihydrolipoyl]-L-lysyl-[protein] + 4 Fe(3+) + 2 hydrogen sulfide + 2 5'-deoxyadenosine + 2 L-methionine + 2 reduced [2Fe-2S]-[ferredoxin]. The protein operates within protein modification; protein lipoylation via endogenous pathway; protein N(6)-(lipoyl)lysine from octanoyl-[acyl-carrier-protein]: step 2/2. In terms of biological role, catalyzes the radical-mediated insertion of two sulfur atoms into the C-6 and C-8 positions of the octanoyl moiety bound to the lipoyl domains of lipoate-dependent enzymes, thereby converting the octanoylated domains into lipoylated derivatives. This chain is Lipoyl synthase, found in Synechococcus sp. (strain RCC307).